The primary structure comprises 314 residues: GTPase Era (314 aa).

Residues 7–188 (RCGFAAVIGS…REFIAGLMPE (182 aa)) form the Era-type G domain. The interval 15-22 (GSPNAGKS) is G1. 15–22 (GSPNAGKS) provides a ligand contact to GTP. The G2 stretch occupies residues 41 to 45 (QTTRF). Positions 62–65 (DTPG) are G3. GTP-binding positions include 62–66 (DTPGV) and 138–141 (NKVD). The tract at residues 138–141 (NKVD) is G4. Residues 167-169 (ISA) form a G5 region. The region spanning 219–296 (LHEELPYASM…HLFLNVKVDA (78 aa)) is the KH type-2 domain.

The protein belongs to the TRAFAC class TrmE-Era-EngA-EngB-Septin-like GTPase superfamily. Era GTPase family. As to quaternary structure, monomer.

It localises to the cytoplasm. Its subcellular location is the cell inner membrane. Functionally, an essential GTPase that binds both GDP and GTP, with rapid nucleotide exchange. Plays a role in 16S rRNA processing and 30S ribosomal subunit biogenesis and possibly also in cell cycle regulation and energy metabolism. The protein is GTPase Era of Maricaulis maris (strain MCS10) (Caulobacter maris).